Here is a 241-residue protein sequence, read N- to C-terminus: Small ribosomal subunit protein uS2c (241 aa).

It belongs to the universal ribosomal protein uS2 family.

Its subcellular location is the plastid. The protein resides in the chloroplast. In Porphyra purpurea (Red seaweed), this protein is Small ribosomal subunit protein uS2c (rps2).